An 87-amino-acid chain; its full sequence is Large ribosomal subunit protein bL27 (87 aa).

The interval 1-21 (MAHKKAGGSSRNGRDSESKRL) is disordered.

It belongs to the bacterial ribosomal protein bL27 family.

The protein is Large ribosomal subunit protein bL27 of Paraburkholderia xenovorans (strain LB400).